Consider the following 246-residue polypeptide: mRNA-decapping protein g5R (246 aa).

The Nudix hydrolase domain maps to 91-239; sequence KYQKFKKNWL…IIGPAFNFIK (149 aa). The Nudix box signature appears at 128-149; the sequence is GKPKENESDLACAIREFEEETG. E134 lines the Mg(2+) pocket. The Nucleophile role is filled by E143. Positions 147 and 169 each coordinate Mg(2+).

The protein belongs to the Nudix hydrolase family. DIPP subfamily. In terms of assembly, interacts with host RPL23A. Mg(2+) is required as a cofactor. Mn(2+) serves as cofactor.

The protein resides in the host rough endoplasmic reticulum. It catalyses the reaction diphospho-myo-inositol polyphosphate + H2O = myo-inositol polyphosphate + phosphate.. In terms of biological role, decapping enzyme required for the removal of the 5'-end m7GpppN cap tethered to viral and host mRNAs to allow their decay in cells. May therefore accelerate viral and cellular mRNA turnover to eliminate competing host mRNAs and allow stage-specific synthesis of viral proteins. Acceleration of the turnover of cellular transcripts may even promote the shutoff of host protein synthesis. In addition to the mRNA cap, g5R also efficiently hydrolyzes diphosphoinositol polyphosphates. Down-regulation of the level of PP-InsP5 (diphosphoinositol pentakisphosphate) may play a role in viral manipulation of the cellular secretory pathway, a step necessary for the formation of virions. Binds viral and cellular poly(A) mRNAs, thereby decreasing both types of mRNAs. In African swine fever virus (isolate Pig/Kenya/KEN-50/1950) (ASFV), this protein is mRNA-decapping protein g5R.